The chain runs to 729 residues: Serine/threonine-protein kinase TBK1 (729 aa).

The region spanning 9-310 (WLLSDILGQG…ETSDILHRMV (302 aa)) is the Protein kinase domain. Residue 15 to 23 (LGQGATANV) participates in ATP binding. Residue Lys-30 forms a Glycyl lysine isopeptide (Lys-Gly) (interchain with G-Cter in ubiquitin) linkage. Lys-38 contributes to the ATP binding site. The active-site Proton acceptor is the Asp-135. The residue at position 172 (Ser-172) is a Phosphoserine; by autocatalysis and IKKB. The Ubiquitin-like domain maps to 309–385 (MVIHVFSLQQ…ENPIFVVSRE (77 aa)). Lys-401 participates in a covalent cross-link: Glycyl lysine isopeptide (Lys-Gly) (interchain with G-Cter in ubiquitin). Coiled-coil stretches lie at residues 407-657 (DLDG…LQET) and 658-713 (LPQK…ILER). Lys-607 bears the N6-methyllysine; by SETD4 mark. Residues 621–729 (RKMLHLRKQL…DGGLRNVDCL (109 aa)) form an interaction with AZI2, TANK and TBKBP1 region. Residue Lys-670 forms a Glycyl lysine isopeptide (Lys-Gly) (interchain with G-Cter in ubiquitin) linkage. At Ser-716 the chain carries Phosphoserine.

The protein belongs to the protein kinase superfamily. Ser/Thr protein kinase family. I-kappa-B kinase subfamily. In terms of assembly, homodimer. Interacts with DDX3X, TIRAP and TRAF2. Part of a ternary complex consisting of TANK, TRAF2 and TBK1. Interacts with AZI2, TANK and TBKBP1; these interactions are mutually exclusive and mediate TBK1 activation. Interacts with GSK3B; this interaction promotes TBK1 self-association and autophosphorylation. Interacts with SIKE1; SIKE1 is associated with TBK1 under physiological condition and dissociated from TBK1 upon viral infection or TLR3 stimulation. Interacts with IRF3, leading to IRF3 phosphorylation. Interacts with RIGI. Interacts with CYLD. Interacts with OPTN and TRAF3. Interacts with SRC. Interacts with the exocyst complex subunit SEC5/EXOC2; this interaction is sufficient to trigger TBK1 activity. Interacts with STING1, leading to STING1 phosphorylation. Interacts with IFIT3 (via N-terminus). Interacts with MAVS; interaction only takes place in the presence of IFIT3 and leads to MAVS phosphorylation. Interacts (via protein kinase domain) with TTLL12 (via TTL domain); the interaction prevents MAVS binding to TBK1. Interacts with TICAM1; this interaction is enhanced in the presence of WDFY1 and leads to TICAM1 phosphorylation. Interacts with TRIM26. Interacts with TRIM23. Interacts with TTC4 and IKBKE. Interacts with HNRNPA2B1. Interacts with DDX3X. Interacts with TRIM14. Interacts with CEP170; efficient complex formation may be dependent on the presence of CCDC61. Interacts with TRAF3IP3. Interacts with HSP90AA1; the interaction mediates TBK1 association with TOMM70. Interacts with TAX1BP1. Interacts with kinase IKBKB; the complex interacts with STAT1, leading to phosphorylation of STAT1 on 'Thr-749' by IKBKB. Interacts with ICOS; this interaction is critical for the maturation of T follicular regulatory cells. Interacts with RNF144B; this interaction prevents TBK1 phosphorylation and subsequent activation. Interacts with ASB8; this interaction promotes TBK1 proteasomal degradation. Forms a ternary complex with ZNF268 and SETD4; the interaction with SETD4 is ZNF268-dependent and leads to TBK1 monomethylation, which enhances its interaction with IRF3 and MAVS. (Microbial infection) Interacts with Borna disease virus (BDV) P protein leading to its phosphorylation. As to quaternary structure, (Microbial infection) Interacts with Ebola virus protein VP35. In terms of assembly, (Microbial infection) Interacts with HCV NS3; this interaction leads to inhibition of cellular antiviral response by blocking necessary interactions between the TBK1 and its substrates IRF3 and IRF7. (Microbial infection) Interacts with human herpesvirus 1 protein ICP34.5. As to quaternary structure, (Microbial infection) Interacts with Zika virus non-structural protein 1/NS1 and non-structural protein 4B/NS4B. In terms of assembly, (Microbial infection) Interacts with SARS-CoV-2 non-structural protein 6; this interaction decreases IRF3 phosphorylation by 57%, which leads to reduced IFN-beta (IFNB) production. Interacts with SARS-CoV-2 helicase; this interaction inhibits TBK1 phosphorylation and decreases IRF3 phosphorylation by 75%, which leads to reduced IFN-beta production. Interacts with SARS-CoV-2 M protein; the interaction promotes TBK1 degradation via 'Lys-48'-linked ubiquitination. (Microbial infection) Interacts with human cytomegalovirus protein UL35; this interaction inhibits type I interferon production. As to quaternary structure, (Microbial infection) Interacts with heartland virus NSs; this interaction antagonizes TBK1 phosphorylation and inhibits TBK1-IRF3 interaction and thus the establishment of an antiviral state. In terms of assembly, (Microbial infection) Interacts (via N-terminus) with Severe fever with thrombocytopenia virus (SFTSV) NSs; this interaction antagonizes TBK1 phosphorylation and sequesters TBK1 in NSs-induced cytoplasmic inclusion bodies thereby inhibiting the IFN responses. In terms of processing, autophosphorylation at Ser-172 activates the kinase, and is an essential step for virus-triggered signaling. Phosphorylated by IKBKB/IKKB at Ser-172. Phosphorylation requires homodimerization and ubiquitination at Lys-30 and Lys-401. Dephosphorylated at Ser-172 by PPM1B and this negatively regulates its role in mediating antiviral response. 'Lys-63'-linked polyubiquitination by MIB1 after RNA virus infection, or by NRDP1 after LPS stimulation at Lys-30 and Lys-401, participates in kinase activation. 'Lys-48'-linked polyubiquitination at Lys-670 by DTX4 leads to proteasomal degradation. 'Lys-48'-linked polyubiquitination by TRAIP also leads to proteasomal degradation. 'Lys-48'-linked polyubiquitination by TRAF7; leading to proteasomal degradation. 'Lys-63'-linked polyubiquitination by RNF128 at Lys-30 and Lys-401 leads to the activation of antiviral responses. 'Lys-48'-linked polyubiquitination after 'lys-33'-linked deubiquitination by USP38 promotes TBK1 degradation. Post-translationally, (Microbial infection) Interaction with SARS-CoV-2 M protein induces 'Lys-48'-linked ubiquitination which leads to proteasomal degradation. In terms of processing, (Microbial infection) Deubiquitinated by Epstein-Barr virus BPLF1 on both 'Lys-48' and 'Lys-63'-linked ubiquitin chains; leading to inhibition of type I interfewron production. Monomethylation at Lys-607 by SETD4 maximizes TBK1 activation and promotes efficient interferon signaling. Ubiquitous with higher expression in testis. Expressed in the ganglion cells, nerve fiber layer and microvasculature of the retina.

The protein resides in the cytoplasm. The catalysed reaction is L-seryl-[protein] + ATP = O-phospho-L-seryl-[protein] + ADP + H(+). It catalyses the reaction L-threonyl-[protein] + ATP = O-phospho-L-threonyl-[protein] + ADP + H(+). Its function is as follows. Serine/threonine kinase that plays an essential role in regulating inflammatory responses to foreign agents. Following activation of toll-like receptors by viral or bacterial components, associates with TRAF3 and TANK and phosphorylates interferon regulatory factors (IRFs) IRF3 and IRF7 as well as DDX3X. This activity allows subsequent homodimerization and nuclear translocation of the IRFs leading to transcriptional activation of pro-inflammatory and antiviral genes including IFNA and IFNB. In order to establish such an antiviral state, TBK1 form several different complexes whose composition depends on the type of cell and cellular stimuli. Plays a key role in IRF3 activation: acts by first phosphorylating innate adapter proteins MAVS, STING1 and TICAM1 on their pLxIS motif, leading to recruitment of IRF3, thereby licensing IRF3 for phosphorylation by TBK1. Phosphorylated IRF3 dissociates from the adapter proteins, dimerizes, and then enters the nucleus to induce expression of interferons. Thus, several scaffolding molecules including FADD, TRADD, MAVS, AZI2, TANK or TBKBP1/SINTBAD can be recruited to the TBK1-containing-complexes. Under particular conditions, functions as a NF-kappa-B effector by phosphorylating NF-kappa-B inhibitor alpha/NFKBIA, IKBKB or RELA to translocate NF-Kappa-B to the nucleus. Restricts bacterial proliferation by phosphorylating the autophagy receptor OPTN/Optineurin on 'Ser-177', thus enhancing LC3 binding affinity and antibacterial autophagy. Phosphorylates SMCR8 component of the C9orf72-SMCR8 complex, promoting autophagosome maturation. Phosphorylates ATG8 proteins MAP1LC3C and GABARAPL2, thereby preventing their delipidation and premature removal from nascent autophagosomes. Seems to play a role in energy balance regulation by sustaining a state of chronic, low-grade inflammation in obesity, which leads to a negative impact on insulin sensitivity. Attenuates retroviral budding by phosphorylating the endosomal sorting complex required for transport-I (ESCRT-I) subunit VPS37C. Phosphorylates Borna disease virus (BDV) P protein. Plays an essential role in the TLR3- and IFN-dependent control of herpes virus HSV-1 and HSV-2 infections in the central nervous system. Acts both as a positive and negative regulator of the mTORC1 complex, depending on the context: activates mTORC1 in response to growth factors by catalyzing phosphorylation of MTOR, while it limits the mTORC1 complex by promoting phosphorylation of RPTOR. Acts as a positive regulator of the mTORC2 complex by mediating phosphorylation of MTOR, leading to increased phosphorylation and activation of AKT1. Phosphorylates and activates AKT1. Involved in the regulation of TNF-induced RIPK1-mediated cell death, probably acting via CYLD phosphorylation that in turn controls RIPK1 ubiquitination status. Also participates in the differentiation of T follicular regulatory cells together with the receptor ICOS. The chain is Serine/threonine-protein kinase TBK1 from Homo sapiens (Human).